Consider the following 220-residue polypeptide: Tumor protein D54 (220 aa).

Met-1 is subject to N-acetylmethionine. 3 positions are modified to phosphoserine: Ser-3, Ser-12, and Ser-19. The stretch at Gly-40–Gly-82 forms a coiled coil. Residues Ser-96, Ser-149, Ser-168, and Ser-175 each carry the phosphoserine modification. Phosphothreonine is present on Thr-177. The residue at position 180 (Ser-180) is a Phosphoserine. Thr-187 carries the post-translational modification Phosphothreonine. Residues Lys-189–Phe-220 are disordered. Residues Ser-206 and Ser-209 each carry the phosphoserine modification.

Belongs to the TPD52 family. Forms a homodimer or heterodimer with other members of the family. Interacts with MAL2.

This chain is Tumor protein D54 (Tpd52l2), found in Mus musculus (Mouse).